A 174-amino-acid chain; its full sequence is ATP-dependent protease subunit HslV (174 aa).

The active site involves threonine 2. Na(+) contacts are provided by alanine 156, cysteine 159, and threonine 162.

Belongs to the peptidase T1B family. HslV subfamily. In terms of assembly, a double ring-shaped homohexamer of HslV is capped on each side by a ring-shaped HslU homohexamer. The assembly of the HslU/HslV complex is dependent on binding of ATP.

The protein resides in the cytoplasm. It carries out the reaction ATP-dependent cleavage of peptide bonds with broad specificity.. Its activity is regulated as follows. Allosterically activated by HslU binding. Protease subunit of a proteasome-like degradation complex believed to be a general protein degrading machinery. The chain is ATP-dependent protease subunit HslV from Agrobacterium fabrum (strain C58 / ATCC 33970) (Agrobacterium tumefaciens (strain C58)).